An 894-amino-acid chain; its full sequence is B-cell lymphoma/leukemia 11B (894 aa).

2 positions are modified to phosphoserine: S97 and S110. T120 is modified (phosphothreonine). The residue at position 129 (S129) is a Phosphoserine. A Glycyl lysine isopeptide (Lys-Gly) (interchain with G-Cter in SUMO2) cross-link involves residue K137. The C2H2-type 1 zinc finger occupies 221 to 251 (YICTTCKQPFNSAWFLLQHAQNTHGFRIYLE). S256 carries the post-translational modification Phosphoserine. T260 bears the Phosphothreonine mark. A Phosphoserine modification is found at S277. R293 is subject to Omega-N-methylarginine. At R322 the chain carries Asymmetric dimethylarginine. Phosphoserine is present on S358. Disordered stretches follow at residues 370–428 (LAGN…KSKS) and 471–583 (KRHM…GGGA). T376 carries the post-translational modification Phosphothreonine. A phosphoserine mark is found at S381, S398, and S401. Over residues 396–423 (QPSPKSPFLSTPPLPPMPPGGTPPPQPP) the composition is skewed to pro residues. A phosphothreonine mark is found at T406 and T417. 2 consecutive C2H2-type zinc fingers follow at residues 427 to 454 (KSCE…GEKP) and 455 to 482 (YKCQ…HKAG). Basic residues predominate over residues 471–480 (KRHMKTHMHK). Residues S483, S488, S496, and S497 each carry the phosphoserine modification. Residues 511-529 (KAADGDFRHHESDPSLGHE) are compositionally biased toward basic and acidic residues. Residues 530-546 (PEEEDEEEEEEEEELLL) are compositionally biased toward acidic residues. A compositionally biased stretch (gly residues) spans 568 to 583 (NGGGGVPGVPGAGGGA). Glycyl lysine isopeptide (Lys-Gly) (interchain with G-Cter in SUMO2) cross-links involve residues K591 and K617. Residues 653–680 (GRGGGFAPGTEPFPGLFPRKPAPLPSPG) are disordered. Position 678 is a phosphoserine (S678). Residues K686 and K723 each participate in a glycyl lysine isopeptide (Lys-Gly) (interchain with G-Cter in SUMO2) cross-link. Polar residues predominate over residues 737–752 (FATSSEHSSENGSLRF). Residues 737–794 (FATSSEHSSENGSLRFSTPPGDLLDGGLSGRSGTASGGSTPHLGGPGPGRPSSKEGRR) are disordered. A compositionally biased stretch (low complexity) spans 753 to 775 (STPPGDLLDGGLSGRSGTASGGS). The residue at position 754 (T754) is a Phosphothreonine. A phosphoserine mark is found at S765 and S772. 3 consecutive C2H2-type zinc fingers follow at residues 796–823 (DTCE…GERP), 824–853 (YKCE…GKEV), and 854–884 (YRCD…LLTN). N6-acetyllysine is present on K851. K887 is covalently cross-linked (Glycyl lysine isopeptide (Lys-Gly) (interchain with G-Cter in SUMO2)).

As to quaternary structure, interacts with TFCOUP1, SIRT1, ARP1 and EAR2. Interacts with EP300; the interaction is detected in activated T-lymphocytes, but not under resting conditions. Post-translationally, sumoylated with SUMO1. In terms of tissue distribution, highly expressed in brain and in malignant T-cell lines derived from patients with adult T-cell leukemia/lymphoma.

The protein resides in the nucleus. Functionally, key regulator of both differentiation and survival of T-lymphocytes during thymocyte development in mammals. Essential in controlling the responsiveness of hematopoietic stem cells to chemotactic signals by modulating the expression of the receptors CCR7 and CCR9, which direct the movement of progenitor cells from the bone marrow to the thymus. Is a regulator of IL2 promoter and enhances IL2 expression in activated CD4(+) T-lymphocytes. Tumor-suppressor that represses transcription through direct, TFCOUP2-independent binding to a GC-rich response element. May also function in the P53-signaling pathway. The chain is B-cell lymphoma/leukemia 11B (BCL11B) from Homo sapiens (Human).